The following is a 325-amino-acid chain: MNKLIFIIICLGIVDKTISSDFKSYNDGIYSFTYDNICSFKNSIRDQDVYELYYVQAPLLYATYGNLLEKINAYHSGIVLYNKNNGPNITIDYYAIPSFEATLFPKSIIKDSQGNYNITWDTHGLIEVTNYINETYWNKRQLIMYDLSGIQIKQYLSWAPIYNKTHTFYNLFNIESDLSISNSSKIYKNSSTCDDFVWASFDVLYKLGGTIASVQSDPQRDDIKLFISSGEPKIVDYNDSIKRNQIASFFNELKDFANLGKNKTALEIFNELITFFNGYFYCYIDGEYYEMKLSKQNPISFTYLPSPIPIGKRNFNEIKKLGFCK.

A signal peptide spans 1-19 (MNKLIFIIICLGIVDKTIS). N-linked (GlcNAc...) asparagine glycans are attached at residues Asn88, Asn117, Asn133, Asn163, Asn182, Asn189, Asn238, and Asn262.

The protein belongs to the CLN5 family.

The sequence is that of Cln5-like protein 2 (cln5lb) from Dictyostelium discoideum (Social amoeba).